A 352-amino-acid polypeptide reads, in one-letter code: 4-hydroxy-3-methylbut-2-enyl diphosphate reductase (352 aa).

Residue C36 participates in [4Fe-4S] cluster binding. The (2E)-4-hydroxy-3-methylbut-2-enyl diphosphate site is built by H76 and H114. Residues H76 and H114 each coordinate dimethylallyl diphosphate. H76 and H114 together coordinate isopentenyl diphosphate. C136 lines the [4Fe-4S] cluster pocket. H164 is a binding site for (2E)-4-hydroxy-3-methylbut-2-enyl diphosphate. A dimethylallyl diphosphate-binding site is contributed by H164. H164 serves as a coordination point for isopentenyl diphosphate. The active-site Proton donor is the E166. T204 provides a ligand contact to (2E)-4-hydroxy-3-methylbut-2-enyl diphosphate. Residue C234 participates in [4Fe-4S] cluster binding. S262, S263, N264, and S309 together coordinate (2E)-4-hydroxy-3-methylbut-2-enyl diphosphate. S262, S263, N264, and S309 together coordinate dimethylallyl diphosphate. 4 residues coordinate isopentenyl diphosphate: S262, S263, N264, and S309.

This sequence belongs to the IspH family. It depends on [4Fe-4S] cluster as a cofactor.

It carries out the reaction isopentenyl diphosphate + 2 oxidized [2Fe-2S]-[ferredoxin] + H2O = (2E)-4-hydroxy-3-methylbut-2-enyl diphosphate + 2 reduced [2Fe-2S]-[ferredoxin] + 2 H(+). The catalysed reaction is dimethylallyl diphosphate + 2 oxidized [2Fe-2S]-[ferredoxin] + H2O = (2E)-4-hydroxy-3-methylbut-2-enyl diphosphate + 2 reduced [2Fe-2S]-[ferredoxin] + 2 H(+). The protein operates within isoprenoid biosynthesis; dimethylallyl diphosphate biosynthesis; dimethylallyl diphosphate from (2E)-4-hydroxy-3-methylbutenyl diphosphate: step 1/1. It functions in the pathway isoprenoid biosynthesis; isopentenyl diphosphate biosynthesis via DXP pathway; isopentenyl diphosphate from 1-deoxy-D-xylulose 5-phosphate: step 6/6. In terms of biological role, catalyzes the conversion of 1-hydroxy-2-methyl-2-(E)-butenyl 4-diphosphate (HMBPP) into a mixture of isopentenyl diphosphate (IPP) and dimethylallyl diphosphate (DMAPP). Acts in the terminal step of the DOXP/MEP pathway for isoprenoid precursor biosynthesis. The chain is 4-hydroxy-3-methylbut-2-enyl diphosphate reductase from Bifidobacterium longum (strain NCC 2705).